Reading from the N-terminus, the 325-residue chain is Adenine deaminase (325 aa).

Residues histidine 11, histidine 13, and histidine 189 each contribute to the Zn(2+) site. The Proton donor role is filled by glutamate 192. Aspartate 270 lines the Zn(2+) pocket. Aspartate 271 provides a ligand contact to substrate.

It belongs to the metallo-dependent hydrolases superfamily. Adenosine and AMP deaminases family. Adenine deaminase type 2 subfamily. Zn(2+) is required as a cofactor.

It carries out the reaction adenine + H2O + H(+) = hypoxanthine + NH4(+). Its function is as follows. Catalyzes the hydrolytic deamination of adenine to hypoxanthine. Plays an important role in the purine salvage pathway and in nitrogen catabolism. The protein is Adenine deaminase of Agrobacterium fabrum (strain C58 / ATCC 33970) (Agrobacterium tumefaciens (strain C58)).